Reading from the N-terminus, the 78-residue chain is Exodeoxyribonuclease 7 small subunit (78 aa).

It belongs to the XseB family. In terms of assembly, heterooligomer composed of large and small subunits.

The protein resides in the cytoplasm. The enzyme catalyses Exonucleolytic cleavage in either 5'- to 3'- or 3'- to 5'-direction to yield nucleoside 5'-phosphates.. Its function is as follows. Bidirectionally degrades single-stranded DNA into large acid-insoluble oligonucleotides, which are then degraded further into small acid-soluble oligonucleotides. This is Exodeoxyribonuclease 7 small subunit from Desulfitobacterium hafniense (strain Y51).